The sequence spans 464 residues: Formin-like protein 19 (464 aa).

The interval 1 to 74 (MSLVDISGAY…PRPCSRPPKT (74 aa)) is disordered. The span at 14–70 (PLPPPPPPLMRRRAPLPPPPPPPLMRRRAPPPPPPPLMRRRAPPPPPPPPLPRPCSR) shows a compositional bias: pro residues. Residues 68–462 (CSRPPKTKCS…KAAKEAEMEK (395 aa)) form the FH2 domain.

Belongs to the formin-like family. Class-II subfamily.

The protein is Formin-like protein 19 (FH19) of Arabidopsis thaliana (Mouse-ear cress).